Consider the following 171-residue polypeptide: Putative F-box protein At1g32020 (171 aa).

Residues 3 to 49 form the F-box domain; the sequence is CDRISTLPDHLVAKIVSYLGIKDSIKTSVLSKRWEFVWLKVVGLDLK.

This chain is Putative F-box protein At1g32020, found in Arabidopsis thaliana (Mouse-ear cress).